A 317-amino-acid chain; its full sequence is Mitochondrial outer membrane protein porin 4 (317 aa).

A disordered region spans residues 1–30 (MEAETECKVPGVYSETGIPVEDPAPGLNSD).

It belongs to the eukaryotic mitochondrial porin (TC 1.B.8.1) family.

The protein resides in the mitochondrion outer membrane. Forms a channel through the mitochondrial outer membrane that allows diffusion of small hydrophilic molecules. The channel adopts an open conformation at low or zero membrane potential and a closed conformation at potentials above 30-40 mV. The open state has a weak anion selectivity whereas the closed state is cation-selective. This is Mitochondrial outer membrane protein porin 4 (VDAC4) from Oryza sativa subsp. japonica (Rice).